The primary structure comprises 604 residues: Ectonucleoside triphosphate diphosphohydrolase 7 (604 aa).

Residues 1 to 28 are Cytoplasmic-facing; sequence MARISFSYLCPASWYFTVPTVSPFLRQR. The chain crosses the membrane as a helical span at residues 29 to 49; that stretch reads VAFLGLFFISCLLLLMLIIDF. The Vesicular portion of the chain corresponds to 50–546; sequence RHWSASLPRD…QAHGSWFRLS (497 aa). Catalysis depends on E217, which acts as the Proton acceptor. N330 carries N-linked (GlcNAc...) asparagine glycosylation. An intrachain disulfide couples C448 to C477. Residues 547-567 traverse the membrane as a helical segment; sequence FVYNHYLFFACILVVLLAIFL. Topologically, residues 568 to 604 are cytoplasmic; it reads YLLRLRRIHHRQTRASAPLDLLWLEEVVPMMGVQVGP.

It belongs to the GDA1/CD39 NTPase family. Requires Ca(2+) as cofactor. It depends on Mg(2+) as a cofactor.

The protein localises to the cytoplasmic vesicle membrane. It catalyses the reaction a ribonucleoside 5'-triphosphate + H2O = a ribonucleoside 5'-diphosphate + phosphate + H(+). The enzyme catalyses UTP + H2O = UDP + phosphate + H(+). The catalysed reaction is GTP + H2O = GDP + phosphate + H(+). It carries out the reaction CTP + H2O = CDP + phosphate + H(+). In terms of biological role, catalyzes the hydrolysis of nucleoside triphosphates and diphosphates in a calcium- or magnesium-dependent manner. Preferentially hydrolyzes nucleoside 5'-triphosphates, with substrate preference for UTP &gt; GTP &gt; CTP. Hydrolyzes ATP and nucleoside diphosphates only to a minor extent. The sequence is that of Ectonucleoside triphosphate diphosphohydrolase 7 (ENTPD7) from Homo sapiens (Human).